A 1286-amino-acid chain; its full sequence is DNA-directed RNA polymerase subunit beta' (1286 aa).

Zn(2+) contacts are provided by cysteine 66, cysteine 68, cysteine 81, and cysteine 84. The Mg(2+) site is built by aspartate 527, aspartate 529, and aspartate 531. The Zn(2+) site is built by cysteine 905, cysteine 981, cysteine 988, and cysteine 991.

It belongs to the RNA polymerase beta' chain family. In terms of assembly, the RNAP catalytic core consists of 2 alpha, 1 beta, 1 beta' and 1 omega subunit. When a sigma factor is associated with the core the holoenzyme is formed, which can initiate transcription. It depends on Mg(2+) as a cofactor. Zn(2+) serves as cofactor.

It carries out the reaction RNA(n) + a ribonucleoside 5'-triphosphate = RNA(n+1) + diphosphate. Functionally, DNA-dependent RNA polymerase catalyzes the transcription of DNA into RNA using the four ribonucleoside triphosphates as substrates. The protein is DNA-directed RNA polymerase subunit beta' of Mycoplasmoides gallisepticum (strain R(low / passage 15 / clone 2)) (Mycoplasma gallisepticum).